The following is a 97-amino-acid chain: Large ribosomal subunit protein bL27 (97 aa).

A propeptide spanning residues 1 to 9 (MFTFDLQLF) is cleaved from the precursor.

Belongs to the bacterial ribosomal protein bL27 family. Post-translationally, the N-terminus is cleaved by ribosomal processing cysteine protease Prp.

The sequence is that of Large ribosomal subunit protein bL27 from Syntrophomonas wolfei subsp. wolfei (strain DSM 2245B / Goettingen).